The chain runs to 162 residues: Peroxiredoxin-2B (162 aa).

A Thioredoxin domain is found at 4–162 (IAVGDVVPDG…SSADDILKAL (159 aa)). C51 (cysteine sulfenic acid (-SOH) intermediate) is an active-site residue.

The protein belongs to the peroxiredoxin family. Prx5 subfamily. As to quaternary structure, monomer. As to expression, expressed in all tissues but mostly in reproductive tissues such as buds, flowers, siliques and seeds.

The protein resides in the cytoplasm. It catalyses the reaction [glutaredoxin]-dithiol + a hydroperoxide = [glutaredoxin]-disulfide + an alcohol + H2O. In terms of biological role, reduces hydrogen peroxide and alkyl hydroperoxides with reducing equivalents provided through the thioredoxin or glutaredoxin system. May be involved in intracellular redox signaling. Thiol-specific peroxidase that catalyzes the reduction of hydrogen peroxide and organic hydroperoxides to water and alcohols, respectively. Plays a role in cell protection against oxidative stress by detoxifying peroxides and as sensor of hydrogen peroxide-mediated signaling events. The chain is Peroxiredoxin-2B (PRXIIB) from Arabidopsis thaliana (Mouse-ear cress).